The following is a 397-amino-acid chain: Argininosuccinate synthase (397 aa).

9–17 (AYSGGLDTT) serves as a coordination point for ATP. Position 87 (Tyr-87) interacts with L-citrulline. Gly-117 provides a ligand contact to ATP. Thr-119, Asn-123, and Asp-124 together coordinate L-aspartate. Asn-123 contacts L-citrulline. Arg-127, Ser-174, Ser-183, Glu-259, and Tyr-271 together coordinate L-citrulline.

The protein belongs to the argininosuccinate synthase family. Type 1 subfamily. Homotetramer.

The protein resides in the cytoplasm. The catalysed reaction is L-citrulline + L-aspartate + ATP = 2-(N(omega)-L-arginino)succinate + AMP + diphosphate + H(+). It functions in the pathway amino-acid biosynthesis; L-arginine biosynthesis; L-arginine from L-ornithine and carbamoyl phosphate: step 2/3. The protein is Argininosuccinate synthase of Pyrobaculum aerophilum (strain ATCC 51768 / DSM 7523 / JCM 9630 / CIP 104966 / NBRC 100827 / IM2).